Consider the following 161-residue polypeptide: Regulator of ribonuclease activity A (161 aa).

It belongs to the RraA family. As to quaternary structure, homotrimer. Binds to both RNA-binding sites in the C-terminal region of Rne and to RhlB.

The protein resides in the cytoplasm. Its function is as follows. Globally modulates RNA abundance by binding to RNase E (Rne) and regulating its endonucleolytic activity. Can modulate Rne action in a substrate-dependent manner by altering the composition of the degradosome. Modulates RNA-binding and helicase activities of the degradosome. In Citrobacter koseri (strain ATCC BAA-895 / CDC 4225-83 / SGSC4696), this protein is Regulator of ribonuclease activity A.